A 250-amino-acid chain; its full sequence is Coproheme decarboxylase (250 aa).

Fe-coproporphyrin III-binding positions include R131, 145-149 (YPMNK), H172, and Q185. Y145 is an active-site residue.

This sequence belongs to the ChdC family. Type 1 subfamily. Requires Fe-coproporphyrin III as cofactor.

It catalyses the reaction Fe-coproporphyrin III + 2 H2O2 + 2 H(+) = heme b + 2 CO2 + 4 H2O. The catalysed reaction is Fe-coproporphyrin III + H2O2 + H(+) = harderoheme III + CO2 + 2 H2O. It carries out the reaction harderoheme III + H2O2 + H(+) = heme b + CO2 + 2 H2O. The protein operates within porphyrin-containing compound metabolism; protoheme biosynthesis. Its function is as follows. Involved in coproporphyrin-dependent heme b biosynthesis. Catalyzes the decarboxylation of Fe-coproporphyrin III (coproheme) to heme b (protoheme IX), the last step of the pathway. The reaction occurs in a stepwise manner with a three-propionate intermediate. The chain is Coproheme decarboxylase from Staphylococcus aureus (strain USA300 / TCH1516).